A 165-amino-acid polypeptide reads, in one-letter code: SsrA-binding protein (165 aa).

This sequence belongs to the SmpB family.

Its subcellular location is the cytoplasm. Its function is as follows. Required for rescue of stalled ribosomes mediated by trans-translation. Binds to transfer-messenger RNA (tmRNA), required for stable association of tmRNA with ribosomes. tmRNA and SmpB together mimic tRNA shape, replacing the anticodon stem-loop with SmpB. tmRNA is encoded by the ssrA gene; the 2 termini fold to resemble tRNA(Ala) and it encodes a 'tag peptide', a short internal open reading frame. During trans-translation Ala-aminoacylated tmRNA acts like a tRNA, entering the A-site of stalled ribosomes, displacing the stalled mRNA. The ribosome then switches to translate the ORF on the tmRNA; the nascent peptide is terminated with the 'tag peptide' encoded by the tmRNA and targeted for degradation. The ribosome is freed to recommence translation, which seems to be the essential function of trans-translation. The protein is SsrA-binding protein of Parvibaculum lavamentivorans (strain DS-1 / DSM 13023 / NCIMB 13966).